Reading from the N-terminus, the 573-residue chain is Dihydroxy-acid dehydratase (573 aa).

Cysteine 62 serves as a coordination point for [2Fe-2S] cluster. Aspartate 94 contacts Mg(2+). Cysteine 135 is a [2Fe-2S] cluster binding site. Mg(2+)-binding residues include aspartate 136 and lysine 137. Lysine 137 carries the post-translational modification N6-carboxylysine. Cysteine 212 lines the [2Fe-2S] cluster pocket. Glutamate 463 provides a ligand contact to Mg(2+). Serine 489 functions as the Proton acceptor in the catalytic mechanism.

The protein belongs to the IlvD/Edd family. In terms of assembly, homodimer. Requires [2Fe-2S] cluster as cofactor. It depends on Mg(2+) as a cofactor.

The catalysed reaction is (2R)-2,3-dihydroxy-3-methylbutanoate = 3-methyl-2-oxobutanoate + H2O. It catalyses the reaction (2R,3R)-2,3-dihydroxy-3-methylpentanoate = (S)-3-methyl-2-oxopentanoate + H2O. Its pathway is amino-acid biosynthesis; L-isoleucine biosynthesis; L-isoleucine from 2-oxobutanoate: step 3/4. The protein operates within amino-acid biosynthesis; L-valine biosynthesis; L-valine from pyruvate: step 3/4. Functionally, functions in the biosynthesis of branched-chain amino acids. Catalyzes the dehydration of (2R,3R)-2,3-dihydroxy-3-methylpentanoate (2,3-dihydroxy-3-methylvalerate) into 2-oxo-3-methylpentanoate (2-oxo-3-methylvalerate) and of (2R)-2,3-dihydroxy-3-methylbutanoate (2,3-dihydroxyisovalerate) into 2-oxo-3-methylbutanoate (2-oxoisovalerate), the penultimate precursor to L-isoleucine and L-valine, respectively. This is Dihydroxy-acid dehydratase from Arthrobacter sp. (strain FB24).